Reading from the N-terminus, the 373-residue chain is Dimethylallyltryptophan synthase CymD (373 aa).

Residues Asp55, Val56, and Glu64 each coordinate L-tryptophan. The active-site Nucleophile is Glu64. Dimethylallyl diphosphate contacts are provided by Gln77, Lys146, Trp148, Arg205, and Lys207. Residue Arg211 participates in L-tryptophan binding. Dimethylallyl diphosphate is bound at residue Tyr274. Tyr326 serves as a coordination point for L-tryptophan. Residues Arg337, Lys339, and Tyr341 each contribute to the dimethylallyl diphosphate site. The region spanning Met346–Glu373 is the FtsK domain.

Its function is as follows. Dimethylallyltryptophan synthase; part of the gene cluster that mediates the biosynthesis of cyclic heptapeptides, known as cyclomarins and also of cyclic dipeptides, called cyclomarazines, which have both antimicrobial and cytotoxic effects. Catalyzes the reverse N-prenylation of monomeric L-tryptophan with dimethylallyl diphosphate (DMAPP) to form N-(1,1-dimethylallyl)-tryptophan (r-N-DMAT). The formation of r-N-DMAT appears to proceed via the deprotonation of the indole nitrogen of tryptophan, which facilitates a nucleophilic attack on the carbocation that is forming on the dimethylallyl group as the diphosphate dissociates. The N-(1,1-dimethylallyl)-tryptophan produced by CymD is combined with a range of standard and nonproteinogenic amino acid substrates to synthesize the peptides, a process that is probably catalyzed by the non-canonical nonribosomal peptide synthetase (NRPS), CymA. Other proteins in the cluster catalyze further modifications of the peptides including CymV which catalyzes the oxidation of olefinic cyclomarins and cyclomarazines to their respective epoxide derivatives. Utilizes only DMAPP as the prenyl donor and has no requirement for divalent cations. The chain is Dimethylallyltryptophan synthase CymD from Salinispora arenicola (strain CNS-205).